The chain runs to 211 residues: Claudin-7 (211 aa).

Over 1–7 (MANSGLQ) the chain is Cytoplasmic. Residues 8 to 28 (LLGFSMAMLGWVGLIASTAIP) form a helical membrane-spanning segment. Topologically, residues 29–81 (QWQMSSYAGDNIITAQAMYKGLWMECVTQSTGMMSCKMYDSVLALPGALQATR) are extracellular. A helical membrane pass occupies residues 82–102 (ALMVVSLVLGFLAMFVATMGM). The Cytoplasmic portion of the chain corresponds to 103–119 (KCTRCGGDDKAKKARIA). A helical membrane pass occupies residues 120-140 (MTGGIVFIVAGLAALVACSWI). The Extracellular portion of the chain corresponds to 141-160 (GHQIVTDFYNPLTPMNVKYE). The chain crosses the membrane as a helical span at residues 161 to 181 (FGPAIFIGWAGSALVLLGGAL). The Cytoplasmic segment spans residues 182–211 (LSCSCPGSESKAAYRAPRSYPKSNSSKEYV). The segment at 210–211 (YV) is interactions with TJP1, TJP2 and TJP3.

This sequence belongs to the claudin family. In terms of assembly, directly interacts with TJP1/ZO-1, TJP2/ZO-2 and TJP3/ZO-3. The phosphorylated form interacts with EPCAM. Phosphorylated. In terms of tissue distribution, expressed predominantly in lung and kidney.

It localises to the cell membrane. Its subcellular location is the basolateral cell membrane. The protein resides in the cell junction. It is found in the tight junction. Functionally, plays a major role in tight junction-specific obliteration of the intercellular space, through calcium-independent cell-adhesion activity. This Mus musculus (Mouse) protein is Claudin-7 (Cldn7).